Reading from the N-terminus, the 4349-residue chain is Dynein heavy chain, cytoplasmic (4349 aa).

Residues 1–1907 form a stem region; sequence MEVTSAAAPS…YIKMANAKLN (1907 aa). 6 coiled-coil regions span residues 459-480, 1178-1215, 1266-1293, 1334-1354, 1560-1577, and 1640-1670; these read WEENVKEFTNVAREVTRRRNEK, LMKFASRLGNRMREINAEIEKARKHLESQSSDASSTAQ, SQWEALKEILEKKSRIVQDQTDALQAKI, ESRISKLQDDAQMVAKAKEAL, YKEFEEEAVAWEDKLNRV, and NIPNVQKSLERLAEMLNKIQKALGEYLEKER. 4 AAA regions span residues 1908 to 2133, 2201 to 2459, 2565 to 2814, and 2908 to 3177; these read YGFE…VLVS, NAIR…FTTA, EVNT…WVRG, and TFCE…QGKV. 1946 to 1953 serves as a coordination point for ATP; that stretch reads GPAGTGKT. A coiled-coil region spans residues 2194–2217; sequence ANLEALENAIRELAAERHLVVNEL. ATP is bound by residues 2239–2246, 2604–2611, and 2946–2953; these read GNSGSGKS, GPPGSGKT, and GVSGSGKT. 3 coiled-coil regions span residues 3186-3294, 3420-3477, and 3774-3807; these read LDFV…LAKA, GPLK…EMSR, and DNVIETLETLKTEAAEISAKMSNTEGVMAEVEEI. The stalk stretch occupies residues 3186–3477; the sequence is LDFVTQYIKL…TQAIKAEMSR (292 aa). AAA regions lie at residues 3563-3792 and 4001-4213; these read LSTA…EISA and AERF…IVDT.

Belongs to the dynein heavy chain family. As to quaternary structure, consists of at least two heavy chains and a number of intermediate and light chains.

The protein resides in the cytoplasm. Its subcellular location is the cytoskeleton. In terms of biological role, cytoplasmic dynein acts as a motor for the intracellular retrograde motility of vesicles and organelles along microtubules. Dynein has ATPase activity; the force-producing power stroke is thought to occur on release of ADP. In Fusarium vanettenii (Neocosmospora pisi), this protein is Dynein heavy chain, cytoplasmic (DHC1).